A 179-amino-acid polypeptide reads, in one-letter code: uncharacterized protein (179 aa).

Positions 53 to 82 (SPEREDPESPTRGVDEVDGACSEPPTPRPE) are disordered. Residues 54–67 (PEREDPESPTRGVD) show a composition bias toward basic and acidic residues.

This is an uncharacterized protein from Ictaluridae (bullhead catfishes).